The chain runs to 262 residues: Ribosomal RNA small subunit methyltransferase A (262 aa).

S-adenosyl-L-methionine is bound by residues asparagine 14, leucine 16, glycine 41, glutamate 62, aspartate 87, and asparagine 109.

It belongs to the class I-like SAM-binding methyltransferase superfamily. rRNA adenine N(6)-methyltransferase family. RsmA subfamily.

The protein localises to the cytoplasm. It carries out the reaction adenosine(1518)/adenosine(1519) in 16S rRNA + 4 S-adenosyl-L-methionine = N(6)-dimethyladenosine(1518)/N(6)-dimethyladenosine(1519) in 16S rRNA + 4 S-adenosyl-L-homocysteine + 4 H(+). In terms of biological role, specifically dimethylates two adjacent adenosines (A1518 and A1519) in the loop of a conserved hairpin near the 3'-end of 16S rRNA in the 30S particle. May play a critical role in biogenesis of 30S subunits. This is Ribosomal RNA small subunit methyltransferase A from Francisella tularensis subsp. holarctica (strain FTNF002-00 / FTA).